A 72-amino-acid chain; its full sequence is Translation initiation factor IF-1 (72 aa).

One can recognise an S1-like domain in the interval 1–72; the sequence is MAKDDVIEVE…TRGRITYRYK (72 aa). Tyrosine 60 bears the Phosphotyrosine mark.

Belongs to the IF-1 family. In terms of assembly, component of the 30S ribosomal translation pre-initiation complex which assembles on the 30S ribosome in the order IF-2 and IF-3, IF-1 and N-formylmethionyl-tRNA(fMet); mRNA recruitment can occur at any time during PIC assembly.

It is found in the cytoplasm. Functionally, one of the essential components for the initiation of protein synthesis. Stabilizes the binding of IF-2 and IF-3 on the 30S subunit to which N-formylmethionyl-tRNA(fMet) subsequently binds. Helps modulate mRNA selection, yielding the 30S pre-initiation complex (PIC). Upon addition of the 50S ribosomal subunit IF-1, IF-2 and IF-3 are released leaving the mature 70S translation initiation complex. This Geobacillus thermodenitrificans (strain NG80-2) protein is Translation initiation factor IF-1.